Here is a 575-residue protein sequence, read N- to C-terminus: Transcription factor E3 (575 aa).

Ser-47 is subject to Phosphoserine; by MTOR. The span at 90–126 (ATLSASSSAGGSRTPAMSSSSSSRVLLRQQLMRAQAQ) shows a compositional bias: low complexity. Residues 90-153 (ATLSASSSAG…SPAPASPAIS (64 aa)) form a disordered region. Positions 127 to 136 (EQERRERREQ) are enriched in basic and acidic residues. Position 188 is an asymmetric dimethylarginine (Arg-188). The tract at residues 211–246 (LASQALTPPPGPASAQPLPAPEAAHTTGPTGSAPNS) is disordered. The tract at residues 260-271 (EIDDVIDEIISL) is strong transcription activation domain. Ser-321 is subject to Phosphoserine; by MTOR. A Glycyl lysine isopeptide (Lys-Gly) (interchain with G-Cter in SUMO2) cross-link involves residue Lys-339. The bHLH domain occupies 346-399 (QKKDNHNLIERRRRFNINDRIKELGTLIPKSSDPEMRWNKGTILKASVDYIRKL). The Nuclear localization signal motif lies at 356–359 (RRRR). Positions 409-430 (LESRQRSLEQANRSLQLRIQEL) are leucine-zipper. Disordered regions lie at residues 473 to 498 (GAATFHVGGGPAQNAPHQQPPAPPSD) and 534 to 575 (GGLS…EEES). Low complexity predominate over residues 539–575 (GALSPLRAASDPLLSSVSPAVSKASSRRSSFSMEEES). A phosphoserine mark is found at Ser-542, Ser-548, Ser-554, Ser-556, Ser-560, and Ser-568.

The protein belongs to the MiT/TFE family. As to quaternary structure, homodimer and heterodimer; with TFEB or MITF. Interacts with RRAGC/RagC GDP-bound and RRAGD/RagD GDP-bound; promoting its recruitment to lysosomal membrane in the presence of nutrients. Interacts with TSC22D1; the interaction is enhanced in the presence of TGF-beta. Post-translationally, sumoylated; does not affect dimerization with MITF. Phosphorylation ar Ser-47 and Ser-321 by MTOR via non-canonical mTORC1 pathway regulates its stability and subcellular location, respectively. When nutrients are present, phosphorylation by MTOR at Ser-47 promotes ubiquitination by the SCF(BTRC) complex, followed by degradation. When nutrients are present, phosphorylation by MTOR at Ser-321 also promotes association with 14-3-3/YWHA adapters and retention in the cytosol. Phosphorylation at Ser-47 plays a more critical role than phosphorylation at Ser-321 for TFE3 inactivation. Inhibition of mTORC1, starvation and lysosomal disruption, promotes dephosphorylation and transcription factor activity. In terms of processing, ubiquitinated by the SCF(BTRC) and SCF(FBXW11) complexes following phosphorylation at Ser-47 by MTOR, leading to its degradation by the proteasome. As to expression, ubiquitous in fetal and adult tissues.

It localises to the cytoplasm. The protein localises to the cytosol. It is found in the nucleus. Its subcellular location is the lysosome membrane. Its function is as follows. Transcription factor that acts as a master regulator of lysosomal biogenesis and immune response. Specifically recognizes and binds E-box sequences (5'-CANNTG-3'); efficient DNA-binding requires dimerization with itself or with another MiT/TFE family member such as TFEB or MITF. Involved in the cellular response to amino acid availability by acting downstream of MTOR: in the presence of nutrients, TFE3 phosphorylation by MTOR promotes its inactivation. Upon starvation or lysosomal stress, inhibition of MTOR induces TFE3 dephosphorylation, resulting in transcription factor activity. Specifically recognizes and binds the CLEAR-box sequence (5'-GTCACGTGAC-3') present in the regulatory region of many lysosomal genes, leading to activate their expression, thereby playing a central role in expression of lysosomal genes. Maintains the pluripotent state of embryonic stem cells by promoting the expression of genes such as ESRRB; mTOR-dependent TFE3 cytosolic retention and inactivation promotes exit from pluripotency. Required to maintain the naive pluripotent state of hematopoietic stem cell; mTOR-dependent cytoplasmic retention of TFE3 promotes the exit of hematopoietic stem cell from pluripotency. TFE3 activity is also involved in the inhibition of neuronal progenitor differentiation. Acts as a positive regulator of browning of adipose tissue by promoting expression of target genes; mTOR-dependent phosphorylation promotes cytoplasmic retention of TFE3 and inhibits browning of adipose tissue. In association with TFEB, activates the expression of CD40L in T-cells, thereby playing a role in T-cell-dependent antibody responses in activated CD4(+) T-cells and thymus-dependent humoral immunity. Specifically recognizes the MUE3 box, a subset of E-boxes, present in the immunoglobulin enhancer. It also binds very well to a USF/MLTF site. Promotes TGF-beta-induced transcription of COL1A2; via its interaction with TSC22D1 at E-boxes in the gene proximal promoter. May regulate lysosomal positioning in response to nutrient deprivation by promoting the expression of PIP4P1. This is Transcription factor E3 from Homo sapiens (Human).